Consider the following 204-residue polypeptide: Signal peptidase I (204 aa).

Residues methionine 1–glutamate 10 lie on the Cytoplasmic side of the membrane. Residues tryptophan 11 to serine 30 form a helical membrane-spanning segment. The Extracellular portion of the chain corresponds to asparagine 31–phenylalanine 204. Residues serine 38 and lysine 76 contribute to the active site.

The protein belongs to the peptidase S26 family.

Its subcellular location is the cell membrane. The enzyme catalyses Cleavage of hydrophobic, N-terminal signal or leader sequences from secreted and periplasmic proteins.. The protein is Signal peptidase I (lepB) of Streptococcus pneumoniae (strain ATCC BAA-255 / R6).